Here is a 212-residue protein sequence, read N- to C-terminus: Nuclear phosphoprotein UL3 homolog (212 aa).

Belongs to the alphaherpesvirinae HHV-1 UL3 family. Phosphorylated.

The protein localises to the host nucleus. This is Nuclear phosphoprotein UL3 homolog from Equus caballus (Horse).